The primary structure comprises 238 residues: tRNA1(Val) (adenine(37)-N6)-methyltransferase (238 aa).

It belongs to the methyltransferase superfamily. tRNA (adenine-N(6)-)-methyltransferase family.

Its subcellular location is the cytoplasm. It catalyses the reaction adenosine(37) in tRNA1(Val) + S-adenosyl-L-methionine = N(6)-methyladenosine(37) in tRNA1(Val) + S-adenosyl-L-homocysteine + H(+). Specifically methylates the adenine in position 37 of tRNA(1)(Val) (anticodon cmo5UAC). This Shewanella putrefaciens (strain CN-32 / ATCC BAA-453) protein is tRNA1(Val) (adenine(37)-N6)-methyltransferase.